The sequence spans 1377 residues: AAAKNGSPPQSAGASVRTFTPLYFLVEPVDTLSVRGSSVILNCSAYSEPSPNIEWKKDGTFLNLVSDDRRQLLPDGSLFISNVVHSKHNKPDEGFYQCVATVDNLGTIVSRTAKLAVAGLPRFTSQPEPSSIYVGNSGILNCEVNADLVPFVRWEQNRQPLLLDDRIVKLPSGTLVISNATEGDEGLYRCIVESGGPPKFSDEAELKVLQESEEMLDLVFLMRPSSMIKVIGQSAVLPCVASGLPAPVIRWMKNEDVLDTESSGRLALLAGGSLEISDVTEDDAGTYFCVADNGNKTIEAQAELTVQVPPEFLKQPANIYARESMDIVFECEVTGKPAPTVKWVKNGDVVIPSDYFKIVKEHNLQVLGLVKSDEGFYQCIAENDVGNAQAGAQLIILEHAPATTGPLPSAPRDVVASLVSTRFIKLTWRTPASDPHGDNLTYSVFYTKEGVARERVENTSQPGEMQVTIQNLMPATVYIFKVMAQNKHGSGESSAPLRVETQPEVQLPGPAPNIRAYATSPTSITVTWETPLSGNGEIQNYKLYYMEKGTDKEQDVDVSSHSYTINGLKKYTEYSFRVVAYNKHGPGVSTQDVAVRTLSDVPSAAPQNLSLEVRNSKSIVIHWQPPSSATQNGQITGYKIRYRKASRKSDVTETVVTGTQLSQLIEGLDRGTEYNFRVAALTVNGTGPATDWLSAETFESDLDESRVPEVPSSLHVRPLVTSIVVSWTPPENQNIVVRGYAIGYGIGSPHAQTIKVDYKQRYYTIENLDPSSHYVITLKAFNNVGEGIPLYESAVTRPHTDTSEVDLFVINAPYTPVPDPTPMMPPVGVQASILSHDTIRITWADNSLPKHQKITDSRYYTVRWKTNIPANTKYKNANATTLSYLVTGLKPNTLYEFSVMVTKGRRSSTWSMTAHGATFELVPTSPPKDVTVVSKEGKPRTIIVNWQPPSEANGKITGYIIYYSTDVNAEIHDWVIEPVVGNRLTHQIQELTLDTPYYFKIQARNSKGMGPMSEAVQFRTPKADSSDKMPNDQALGSAGKGGRLPDLGSDYKPPMSGSNSPHGSPTSPLDSNMLLVIIVSIGVITIVVVVIIAVFCTRRTTSHQKKKRAACKSVNGSHKYKGNCKDVKPPDLWIHHERLELKPIDKSPDPNPVMTDTPIPRNSQDITPVDNSMDSNIHQRRNSYRGHESEDSMSTLAGRRGMRPKMMMPFDSQPPQQSVRNTPSTDTMPASSSQTCCTDHQDPEGATSSSYLASSQEEDSGQSLPTAHVRPSHPLKSFAVPAIPPPGPPIYDPALPSTPLLSQQALNHHLHSVKTASIGTLGRSRPPMPVVVPSAPEVQEATRMLEDSESSYEPDELTKEMAHLEGLMKDLNAITTA.

Residues 1 to 2 (AA) form the signal peptide. At 3-1074 (AKNGSPPQSA…PTSPLDSNML (1072 aa)) the chain is on the extracellular side. Ig-like C2-type domains follow at residues 21 to 114 (PLYF…RTAK), 121 to 206 (PRFT…EAEL), 198 to 305 (PKFS…AELT), and 310 to 395 (PEFL…AQLI). N-linked (GlcNAc...) asparagine glycosylation occurs at Asn42. Cystine bridges form between Cys43–Cys98, Cys142–Cys190, and Cys239–Cys289. An N-linked (GlcNAc...) asparagine glycan is attached at Asn179. The N-linked (GlcNAc...) asparagine glycan is linked to Asn295. A disulfide bond links Cys331 and Cys379. Fibronectin type-III domains follow at residues 410–504 (APRD…TQPE), 510–600 (PAPN…TLSD), 605–700 (APQN…TFES), 710–800 (VPSS…RPHT), 825–924 (PPVG…LVPT), and 926–1023 (PPKD…TPKA). Asn439 and Asn458 each carry an N-linked (GlcNAc...) asparagine glycan. 2 N-linked (GlcNAc...) asparagine glycosylation sites follow: Asn608 and Asn684. A glycan (N-linked (GlcNAc...) asparagine) is linked at Asn878. The tract at residues 1010–1066 (GPMSEAVQFRTPKADSSDKMPNDQALGSAGKGGRLPDLGSDYKPPMSGSNSPHGSPT) is disordered. Basic and acidic residues predominate over residues 1021 to 1030 (PKADSSDKMP). Over residues 1056-1066 (SGSNSPHGSPT) the composition is skewed to polar residues. A helical transmembrane segment spans residues 1075 to 1095 (LVIIVSIGVITIVVVVIIAVF). The Cytoplasmic segment spans residues 1096–1377 (CTRRTTSHQK…MKDLNAITTA (282 aa)). Residues 1143 to 1281 (PIDKSPDPNP…SHPLKSFAVP (139 aa)) are disordered. 2 positions are modified to phosphoserine: Ser1147 and Ser1163. Polar residues-rich tracts occupy residues 1160 to 1176 (PRNSQDITPVDNSMDSN), 1213 to 1238 (QPPQQSVRNTPSTDTMPASSSQTCCT), and 1246 to 1265 (ATSSSYLASSQEEDSGQSLP). Residue Thr1167 is modified to Phosphothreonine. A Phosphoserine modification is found at Ser1317. Thr1320 bears the Phosphothreonine mark. Ser1348, Ser1350, and Ser1351 each carry phosphoserine.

The protein belongs to the immunoglobulin superfamily. DCC family. In terms of assembly, interacts with MYO10. Interacts with RGMA and RGMB. Interacts with BMP2, BMP4, BMP6, and BMP7.

The protein resides in the cell membrane. Functionally, multi-functional cell surface receptor regulating cell adhesion in many diverse developmental processes, including neural tube and mammary gland formation, myogenesis and angiogenesis. Receptor for members of the BMP, netrin, and repulsive guidance molecule (RGM) families. Netrin-Neogenin interactions result in a chemoattractive axon guidance response and cell-cell adhesion, the interaction between NEO1/Neogenin and RGMa and RGMb induces a chemorepulsive response. This chain is Neogenin (Neo1), found in Rattus norvegicus (Rat).